Consider the following 478-residue polypeptide: Uronate isomerase (478 aa).

Belongs to the metallo-dependent hydrolases superfamily. Uronate isomerase family.

It carries out the reaction D-glucuronate = D-fructuronate. It catalyses the reaction aldehydo-D-galacturonate = keto-D-tagaturonate. The protein operates within carbohydrate metabolism; pentose and glucuronate interconversion. The protein is Uronate isomerase of Bacillus pumilus (strain SAFR-032).